Reading from the N-terminus, the 1399-residue chain is DNA-directed RNA polymerase subunit beta' (1399 aa).

Residues Cys-70, Cys-72, Cys-85, and Cys-88 each contribute to the Zn(2+) site. Residues Asp-460, Asp-462, and Asp-464 each contribute to the Mg(2+) site. 4 residues coordinate Zn(2+): Cys-814, Cys-888, Cys-895, and Cys-898.

Belongs to the RNA polymerase beta' chain family. The RNAP catalytic core consists of 2 alpha, 1 beta, 1 beta' and 1 omega subunit. When a sigma factor is associated with the core the holoenzyme is formed, which can initiate transcription. It depends on Mg(2+) as a cofactor. Requires Zn(2+) as cofactor.

It carries out the reaction RNA(n) + a ribonucleoside 5'-triphosphate = RNA(n+1) + diphosphate. Its function is as follows. DNA-dependent RNA polymerase catalyzes the transcription of DNA into RNA using the four ribonucleoside triphosphates as substrates. This chain is DNA-directed RNA polymerase subunit beta', found in Stutzerimonas stutzeri (strain A1501) (Pseudomonas stutzeri).